Here is a 304-residue protein sequence, read N- to C-terminus: E3 ubiquitin-protein ligase CHIP (304 aa).

The segment covering 1 to 10 has biased composition (basic and acidic residues); that stretch reads MKGKEEKEGG. The segment at 1 to 30 is disordered; that stretch reads MKGKEEKEGGARLGTGGGGSPDKSPSAQEL. Residue Lys2 forms a Glycyl lysine isopeptide (Lys-Gly) (interchain with G-Cter in ubiquitin) linkage. A compositionally biased stretch (gly residues) spans 11–20; sequence ARLGTGGGGS. Ser20 is subject to Phosphoserine. Residue Lys23 forms a Glycyl lysine isopeptide (Lys-Gly) (interchain with G-Cter in ubiquitin) linkage. 2 positions are modified to phosphoserine: Ser24 and Ser26. TPR repeat units follow at residues 27–60, 61–94, and 96–128; these read AQEL…NPLV, AVYY…DGQS, and KAHF…AKEQ. The interval 102 to 201 is required for interaction with MAPK7; the sequence is GQCQLEMESY…GHIRAQQACI (100 aa). Residues 143–197 form a required for interaction with and ubiquitination of MYOCD region; it reads AKKKRWNSIEERRIHQESELHSYLTRLIAAERERELEECQRNHEGDEDDGHIRAQ. Residues 144 to 198 are required for interaction with FOXO1; that stretch reads KKKRWNSIEERRIHQESELHSYLTRLIAAERERELEECQRNHEGDEDDGHIRAQQ. Residues 144-304 are required for ubiquitination of FOXO1; sequence KKKRWNSIEE…ISENGWVEDY (161 aa). Ser150 carries the post-translational modification Phosphoserine. Glycyl lysine isopeptide (Lys-Gly) (interchain with G-Cter in ubiquitin) cross-links involve residues Lys222 and Lys256. The U-box domain maps to 227 to 301; the sequence is DIPDYLCGKI…DAFISENGWV (75 aa). Ser274 is modified (phosphoserine).

In terms of assembly, homodimer. Interacts with BAG2, and with the E2 ubiquitin conjugating enzymes UBE2D1, UBE2D2 and UBE2D3. Detected in a ternary complex containing STUB1, HSPA1A and HSPBP1. Part of a complex composed of STUB1/CHIP, VCP/p97, CHRNA3, and UBXN2A that modulates the ubiquitination and endoplasmic reticulum-associated degradation (ERAD) of CHRNA3. Within the complex UBXN2A acts as a scaffold protein required for the interaction of CHRNA3 with VCP/p97, this interaction also inhibits CHRNA3 ubiquitination by STUB1/CHIP and subsequently ERAD. Interacts with MKKS. Interacts with DNAAF4. Interacts (via the U-box domain) with the UBE2V2-UBE2N heterodimer; the complex has a specific 'Lys-63'-linked polyubiquitination activity. Interacts (when monoubiquitinated) with ATXN3. Interacts with UBE2W. Interacts with DNAJB6. Interacts with FLCN and HSP90AA1. Interacts with HSP90. Interacts with UBE2N and UBE2V1. Interacts (via TPR repeats) with HSPA8 (via C-terminus). Interacts (via TPR repeats) with HSPA1A (via C-terminus). Interacts with the non-acetylated form of HSPA1A and HSPA1B. Interacts with SMAD3 and HSP90AB1. Interacts with UBE4B. Interacts with PRMT5. Interacts with MYOCD (via C-terminus). Interacts with FOXO1 (when phosphorylated on 'Ser-250'). Interacts with MAPK7/ERK5; the interaction is enhanced in the presence of IGF1 or MAP2K5 and promotes STUB1/CHIP E3 ligase activity. Interacts with and ubiquitinates ESR1; the interaction is promoted in the absence of estradiol (17-beta-estradiol/E2). Interacts with ESR2. Interacts with and ubiquitinates NFATC3; HSPA1A/HSP70 is required as a co-chaperone. In macrophages, interacts with PAQR3; the interaction promotes PPARG poylubiquitination and STUB1-mediated degradation. Component of the chaperone-assisted selective autophagy (CASA) complex consisting of BAG3, HSPA8/HSC70, HSPB8 and STUB1/CHIP. In terms of processing, auto-ubiquitinated; mediated by UBE2D1 and UBE2D2 and enhanced in the presence of MAP2K5. Monoubiquitinated at Lys-2 following cell stress by UBE2W, promoting the interaction with ATXN3. As to expression, expressed in the adventitia layer of the carotid artery (at protein level). Expressed in the CA1 region of the hippocampus (at protein level). Expressed in the uterus (at protein level).

It is found in the cytoplasm. The protein localises to the nucleus. The protein resides in the mitochondrion. The enzyme catalyses S-ubiquitinyl-[E2 ubiquitin-conjugating enzyme]-L-cysteine + [acceptor protein]-L-lysine = [E2 ubiquitin-conjugating enzyme]-L-cysteine + N(6)-ubiquitinyl-[acceptor protein]-L-lysine.. It functions in the pathway protein modification; protein ubiquitination. E3 ubiquitin-protein ligase which targets misfolded chaperone substrates towards proteasomal degradation. Plays a role in the maintenance of mitochondrial morphology and promotes mitophagic removal of dysfunctional mitochondria; thereby acts as a protector against apoptosis in response to cellular stress. Negatively regulates vascular smooth muscle contraction, via degradation of the transcriptional activator MYOCD and subsequent loss of transcription of genes involved in vascular smooth muscle contraction. Promotes survival and proliferation of cardiac smooth muscle cells via ubiquitination and degradation of FOXO1, resulting in subsequent repression of FOXO1-mediated transcription of pro-apoptotic genes. Ubiquitinates ICER-type isoforms of CREM and targets them for proteasomal degradation, thereby acts as a positive effector of MAPK/ERK-mediated inhibition of apoptosis in cardiomyocytes. Inhibits lipopolysaccharide-induced apoptosis and hypertrophy in cardiomyocytes, via ubiquitination and subsequent proteasomal degradation of NFATC3. Collaborates with ATXN3 in the degradation of misfolded chaperone substrates: ATXN3 restricting the length of ubiquitin chain attached to STUB1/CHIP substrates and preventing further chain extension. Ubiquitinates NOS1 in concert with Hsp70 and Hsp40. Modulates the activity of several chaperone complexes, including Hsp70, Hsc70 and Hsp90. Ubiquitinates CHRNA3 targeting it for endoplasmic reticulum-associated degradation in cortical neurons, as part of the STUB1-VCP-UBXN2A complex. Ubiquitinates and promotes ESR1 proteasomal degradation in response to age-related circulating estradiol (17-beta-estradiol/E2) decline, thereby promotes neuronal apoptosis in response to ischemic reperfusion injury. Mediates transfer of non-canonical short ubiquitin chains to HSPA8 that have no effect on HSPA8 degradation. Mediates polyubiquitination of DNA polymerase beta (POLB) at 'Lys-41', 'Lys-61' and 'Lys-81', thereby playing a role in base-excision repair: catalyzes polyubiquitination by amplifying the HUWE1/ARF-BP1-dependent monoubiquitination and leading to POLB-degradation by the proteasome. Mediates polyubiquitination of CYP3A4. Ubiquitinates EPHA2 and may regulate the receptor stability and activity through proteasomal degradation. Acts as a co-chaperone for HSPA1A and HSPA1B chaperone proteins and promotes ubiquitin-mediated protein degradation. Negatively regulates the suppressive function of regulatory T-cells (Treg) during inflammation by mediating the ubiquitination and degradation of FOXP3 in a HSPA1A/B-dependent manner. Catalyzes monoubiquitination of SIRT6, preventing its degradation by the proteasome. Likely mediates polyubiquitination and down-regulates plasma membrane expression of PD-L1/CD274, an immune inhibitory ligand critical for immune tolerance to self and antitumor immunity. Negatively regulates TGF-beta signaling by modulating the basal level of SMAD3 via ubiquitin-mediated degradation. Plays a role in the degradation of TP53. Mediates ubiquitination of RIPK3 leading to its subsequent proteasome-dependent degradation. May regulate myosin assembly in striated muscles together with UBE4B and VCP/p97 by targeting myosin chaperone UNC45B for proteasomal degradation. Ubiquitinates PPARG in macrophages playing a role in M2 macrophages polarization and angiogenesis. The polypeptide is E3 ubiquitin-protein ligase CHIP (Rattus norvegicus (Rat)).